Consider the following 193-residue polypeptide: Ribosomal RNA small subunit methyltransferase G (193 aa).

S-adenosyl-L-methionine-binding positions include glycine 72, phenylalanine 77, 123–124 (IE), and arginine 137.

Belongs to the methyltransferase superfamily. RNA methyltransferase RsmG family.

Its subcellular location is the cytoplasm. The enzyme catalyses guanosine(527) in 16S rRNA + S-adenosyl-L-methionine = N(7)-methylguanosine(527) in 16S rRNA + S-adenosyl-L-homocysteine. Its function is as follows. Specifically methylates the N7 position of guanine in position 527 of 16S rRNA. The protein is Ribosomal RNA small subunit methyltransferase G of Wolinella succinogenes (strain ATCC 29543 / DSM 1740 / CCUG 13145 / JCM 31913 / LMG 7466 / NCTC 11488 / FDC 602W) (Vibrio succinogenes).